The primary structure comprises 461 residues: GTPase Der (461 aa).

EngA-type G domains are found at residues Lys9–Lys171 and Ile200–Ser371. GTP is bound by residues Gly15–Ser22, Asp62–Met66, Asn123–Asp126, Gly206–Ser213, Asp253–Ile257, and Asn317–Asp320. Residues Lys372–Lys456 form the KH-like domain.

It belongs to the TRAFAC class TrmE-Era-EngA-EngB-Septin-like GTPase superfamily. EngA (Der) GTPase family. In terms of assembly, associates with the 50S ribosomal subunit.

Its function is as follows. GTPase that plays an essential role in the late steps of ribosome biogenesis. The polypeptide is GTPase Der (Helicobacter pylori (strain HPAG1)).